The following is a 114-amino-acid chain: Transmembrane protein 14C (114 aa).

Helical transmembrane passes span 8-28 (LMPLHYFGFGYAALVATGGII), 33-53 (AGSVPSLAAGLFFGGLAGLGA), 63-83 (VWVFLATSGTLAGIMGMRFYN), and 89-109 (PAGLIAGASLLMVAKVGISLL).

This sequence belongs to the TMEM14 family.

It localises to the mitochondrion membrane. Required for normal heme biosynthesis. The chain is Transmembrane protein 14C (Tmem14c) from Mus musculus (Mouse).